Here is a 186-residue protein sequence, read N- to C-terminus: dCTP deaminase (186 aa).

Position 107–112 (107–112 (KSTYAR)) interacts with dCTP. The Proton donor/acceptor role is filled by Glu133. Positions 152, 166, and 176 each coordinate dCTP.

The protein belongs to the dCTP deaminase family. Homotrimer.

The catalysed reaction is dCTP + H2O + H(+) = dUTP + NH4(+). It functions in the pathway pyrimidine metabolism; dUMP biosynthesis; dUMP from dCTP (dUTP route): step 1/2. In terms of biological role, catalyzes the deamination of dCTP to dUTP. The chain is dCTP deaminase from Campylobacter curvus (strain 525.92).